A 570-amino-acid chain; its full sequence is Enhancer of polycomb-like protein 1 (570 aa).

Residues 541 to 570 (ALNNLNSGQTSGQTMGSNPGPGAIAPTPET) are disordered. Over residues 543-557 (NNLNSGQTSGQTMGS) the composition is skewed to polar residues.

It belongs to the enhancer of polycomb family. In terms of assembly, component of the NuA4 histone acetyltransferase complex.

It is found in the nucleus. Component of the NuA4 histone acetyltransferase complex which is involved in transcriptional activation of selected genes principally by acetylation of nucleosomal histone H4 and H2A. The NuA4 complex is also involved in DNA repair. Involved in gene silencing by neighboring heterochromatin, blockage of the silencing spreading along the chromosome, and required for cell cycle progression through G2/M. This chain is Enhancer of polycomb-like protein 1 (epl1), found in Emericella nidulans (strain FGSC A4 / ATCC 38163 / CBS 112.46 / NRRL 194 / M139) (Aspergillus nidulans).